A 115-amino-acid polypeptide reads, in one-letter code: NADH-ubiquinone oxidoreductase chain 3 (115 aa).

3 helical membrane passes run 3–23 (LIMTLFINITLTSLLVLIAFW), 55–75 (FFLVAITFLLFDLEIALLLPL), and 84–104 (LTTMLTTALLLISLLAVSLAY).

The protein belongs to the complex I subunit 3 family. Core subunit of respiratory chain NADH dehydrogenase (Complex I) which is composed of 45 different subunits. Interacts with TMEM186. Interacts with TMEM242.

The protein resides in the mitochondrion inner membrane. It catalyses the reaction a ubiquinone + NADH + 5 H(+)(in) = a ubiquinol + NAD(+) + 4 H(+)(out). Functionally, core subunit of the mitochondrial membrane respiratory chain NADH dehydrogenase (Complex I) which catalyzes electron transfer from NADH through the respiratory chain, using ubiquinone as an electron acceptor. Essential for the catalytic activity of complex I. This Ailurus fulgens (Himalayan red panda) protein is NADH-ubiquinone oxidoreductase chain 3.